A 1187-amino-acid chain; its full sequence is BAI1-associated protein 3 (1187 aa).

The disordered stretch occupies residues 55–81 (SFRRRTEQDPGSASADPQEPATGAWKP). Residues 176 to 335 (SLEEHTEAIE…VKSARANGTA (160 aa)) enclose the C2 1 domain. Residues Asp211, Asp217, Asp295, and Asp297 each coordinate Ca(2+). An MHD1 domain is found at 663–784 (FELYLTLADL…EATLFYTELL (122 aa)). One can recognise an MHD2 domain in the interval 888–996 (DEAVAPLMKY…CSTRECIEQF (109 aa)). The C2 2 domain occupies 1010-1136 (RFGRLSVRCH…GVARPQVGGG (127 aa)). Residues Leu1040, Asp1041, Asp1047, Asp1105, Asp1107, Ser1110, and Asp1113 each contribute to the Ca(2+) site.

The protein belongs to the unc-13 family. As to quaternary structure, interacts with ADGRB1; this interaction is direct. Interacts with endosomal SNARE proteins VAMP3, VAMP4, STX6 and STX16; this interaction is increased in the presence of calcium. It depends on Ca(2+) as a cofactor. Predominantly expressed in brain. Also expressed in nonneural tissues such as breast and testes epithelium.

Its subcellular location is the cytoplasm. It localises to the cytosol. It is found in the recycling endosome membrane. The protein resides in the late endosome membrane. The protein localises to the golgi apparatus. Its subcellular location is the trans-Golgi network membrane. It localises to the cell membrane. Functions in endosome to Golgi retrograde transport. In response to calcium influx, may interact with SNARE fusion receptors and membrane phospholipids to mediate endosome fusion with the trans-Golgi network. By promoting the recycling of secretory vesicle transmembrane proteins, it indirectly controls dense-core secretory vesicle biogenesis, maturation and their ability to mediate the constitutive and regulated secretion of neurotransmitters and hormones. May regulate behavior and food intake by controlling calcium-stimulated exocytosis of neurotransmitters including NPY and serotonin and hormones like insulin. Proposed to play a role in hypothalamic neuronal firing by modulating gamma-aminobutyric acid (GABA)ergic inhibitory neurotransmission. The polypeptide is BAI1-associated protein 3 (Homo sapiens (Human)).